The sequence spans 72 residues: Translation initiation factor IF-1 (72 aa).

An S1-like domain is found at 1-72 (MPKDDSIEVE…TRGRITYRAK (72 aa)).

Belongs to the IF-1 family. In terms of assembly, component of the 30S ribosomal translation pre-initiation complex which assembles on the 30S ribosome in the order IF-2 and IF-3, IF-1 and N-formylmethionyl-tRNA(fMet); mRNA recruitment can occur at any time during PIC assembly.

It localises to the cytoplasm. Functionally, one of the essential components for the initiation of protein synthesis. Stabilizes the binding of IF-2 and IF-3 on the 30S subunit to which N-formylmethionyl-tRNA(fMet) subsequently binds. Helps modulate mRNA selection, yielding the 30S pre-initiation complex (PIC). Upon addition of the 50S ribosomal subunit IF-1, IF-2 and IF-3 are released leaving the mature 70S translation initiation complex. This is Translation initiation factor IF-1 from Myxococcus xanthus (strain DK1622).